The chain runs to 362 residues: Isopentenyl-diphosphate delta-isomerase (362 aa).

A substrate-binding site is contributed by 5-6 (RK). FMN is bound by residues 63–65 (AMT), S93, and N122. Residue Q152 coordinates substrate. Residue E153 participates in Mg(2+) binding. Residues K184, T214, 259–261 (GIR), and 280–281 (AG) contribute to the FMN site.

The protein belongs to the IPP isomerase type 2 family. Homooctamer. Dimer of tetramers. It depends on FMN as a cofactor. The cofactor is NADPH. Requires Mg(2+) as cofactor.

It localises to the cytoplasm. The catalysed reaction is isopentenyl diphosphate = dimethylallyl diphosphate. Its function is as follows. Involved in the biosynthesis of isoprenoids. Catalyzes the 1,3-allylic rearrangement of the homoallylic substrate isopentenyl (IPP) to its allylic isomer, dimethylallyl diphosphate (DMAPP). The chain is Isopentenyl-diphosphate delta-isomerase from Nocardia farcinica (strain IFM 10152).